Consider the following 264-residue polypeptide: SPRY domain-containing SOCS box protein 2 (264 aa).

The segment covering 1-19 (MGQTALARGSSSTPTSQAL) has biased composition (polar residues). Residues 1–34 (MGQTALARGSSSTPTSQALYSDFSPPEGLEELLS) form a disordered region. A B30.2/SPRY domain is found at 26 to 221 (PEGLEELLSA…VRIRYMGERR (196 aa)). An SOCS box domain is found at 222 to 264 (VEEPQSLLHLSRLCVRHALGDTRLGQISTLPLPPAMKRYLLYK).

This sequence belongs to the SPSB family. Component of the probable ECS(SPSB2) E3 ubiquitin-protein ligase complex which contains CUL5, RNF7/RBX2, Elongin BC complex and SPSB2. Interacts with CUL5, RNF7, ELOB and ELOC. Interacts with MET. Interacts (via B30.2/SPRY domain) with PAWR; this interaction occurs in association with the Elongin BC complex. Interacts with NOS2.

It localises to the cytoplasm. It is found in the cytosol. Its pathway is protein modification; protein ubiquitination. Substrate recognition component of a SCF-like ECS (Elongin BC-CUL2/5-SOCS-box protein) E3 ubiquitin-protein ligase complex which mediates the ubiquitination and subsequent proteasomal degradation of target proteins. Negatively regulates nitric oxide (NO) production and limits cellular toxicity in activated macrophages by mediating the ubiquitination and proteasomal degradation of NOS2. Acts as a bridge which links NOS2 with the ECS E3 ubiquitin ligase complex components ELOC and CUL5. The sequence is that of SPRY domain-containing SOCS box protein 2 (Spsb2) from Mus musculus (Mouse).